A 316-amino-acid polypeptide reads, in one-letter code: Transaldolase (316 aa).

Residue Lys-132 is the Schiff-base intermediate with substrate of the active site.

This sequence belongs to the transaldolase family. Type 1 subfamily.

The protein localises to the cytoplasm. It catalyses the reaction D-sedoheptulose 7-phosphate + D-glyceraldehyde 3-phosphate = D-erythrose 4-phosphate + beta-D-fructose 6-phosphate. It functions in the pathway carbohydrate degradation; pentose phosphate pathway; D-glyceraldehyde 3-phosphate and beta-D-fructose 6-phosphate from D-ribose 5-phosphate and D-xylulose 5-phosphate (non-oxidative stage): step 2/3. In terms of biological role, transaldolase is important for the balance of metabolites in the pentose-phosphate pathway. This is Transaldolase from Methylomonas aminofaciens.